The sequence spans 318 residues: NADH-quinone oxidoreductase subunit H 2 (318 aa).

Helical transmembrane passes span 4–24, 77–97, 106–126, 146–166, 179–199, 214–234, 238–258, 262–282, and 293–313; these read LLIALFSLILLLALLGAAGVF, LAPALAAFPMLAGFGVVAFAP, VGVLFVMGMLALTVWALVLGA, LAYESFLGLSLMGCVLLAGSF, LWFILLQPLGAALFFLAGLAA, LVAGFMTEYSGMSFALFFLGE, ILLVAALFTTLFLGGWAGPIL, VWFGLKVAAISVVFVWLRAAL, and FAWKVALPLALLNLLVTAWIA.

The protein belongs to the complex I subunit 1 family. NDH-1 is composed of 14 different subunits. Subunits NuoA, H, J, K, L, M, N constitute the membrane sector of the complex.

The protein localises to the cell inner membrane. The enzyme catalyses a quinone + NADH + 5 H(+)(in) = a quinol + NAD(+) + 4 H(+)(out). In terms of biological role, NDH-1 shuttles electrons from NADH, via FMN and iron-sulfur (Fe-S) centers, to quinones in the respiratory chain. The immediate electron acceptor for the enzyme in this species is believed to be ubiquinone. Couples the redox reaction to proton translocation (for every two electrons transferred, four hydrogen ions are translocated across the cytoplasmic membrane), and thus conserves the redox energy in a proton gradient. This subunit may bind ubiquinone. This chain is NADH-quinone oxidoreductase subunit H 2, found in Cereibacter sphaeroides (strain ATCC 17029 / ATH 2.4.9) (Rhodobacter sphaeroides).